Here is a 1011-residue protein sequence, read N- to C-terminus: Vacuolar membrane protease (1011 aa).

The Cytoplasmic segment spans residues 1–9 (MSNPFAFRS). Residues 10–30 (AQVTFWTTVVYLALLVPLVVI) form a helical membrane-spanning segment. The Vacuolar segment spans residues 31-378 (NEGVPPVQPD…TFVLFGLRGM (348 aa)). N-linked (GlcNAc...) asparagine glycosylation is found at N50 and N106. Residues H159 and D171 each coordinate Zn(2+). The active-site Proton acceptor is the E205. Zn(2+) is bound by residues E206, E231, and H304. A glycan (N-linked (GlcNAc...) asparagine) is linked at N331. Residues 379 to 399 (FAWSLTVLIVGPLTLFGMMYL) traverse the membrane as a helical segment. Residues 400–439 (VHKQGKGYAFHTKLRATSDSSSEDGDDEDGEVIRLGGWKG) are Cytoplasmic-facing. The helical transmembrane segment at 440 to 460 (FFRFPFALIVAGALVTGAALL) threads the bilayer. The Vacuolar portion of the chain corresponds to 461–471 (LRKMNPFIIYS). Residues 472–492 (SEYAVWAMMISLFYFGFWLIM) form a helical membrane-spanning segment. Over 493–505 (RGSSYTRPSALHR) the chain is Cytoplasmic. A helical transmembrane segment spans residues 506–526 (LYVHIWLFILGWVALVFATVL). The Vacuolar segment spans residues 527-536 (EDRMRIASGY). Residues 537–557 (IFVFWESQVFLATLVAVCELF) traverse the membrane as a helical segment. Topologically, residues 558-682 (SLPRKIDFAR…WSGPMVTSTW (125 aa)) are cytoplasmic. A compositionally biased stretch (polar residues) spans 595-609 (EATSPQRAGQSSNSP). Disordered regions lie at residues 595 to 627 (EATS…LFRK) and 650 to 671 (IMDS…EGEQ). Residues 610 to 622 (QEDDEDDVPDEET) show a composition bias toward acidic residues. A helical transmembrane segment spans residues 683 to 703 (ILQFLLLGPFMVILGGQVGLL). Residues 704–719 (LTSAVNQTGVDGSSLL) are Vacuolar-facing. The N-linked (GlcNAc...) asparagine glycan is linked to N709. Residues 720–740 (APYLMIAALSAILLMPLSPFI) form a helical membrane-spanning segment. At 741-747 (HRVTKHV) the chain is on the cytoplasmic side. Residues 748-768 (PLFLLAVAFATLIYSLVAFPF) traverse the membrane as a helical segment. At 769 to 1011 (SPRAPYKTFF…LVEGSKAFKV (243 aa)) the chain is on the vacuolar side. N872 is a glycosylation site (N-linked (GlcNAc...) asparagine).

The protein belongs to the peptidase M28 family. Zn(2+) is required as a cofactor.

Its subcellular location is the vacuole membrane. Functionally, may be involved in vacuolar sorting and osmoregulation. The chain is Vacuolar membrane protease from Pyricularia oryzae (strain 70-15 / ATCC MYA-4617 / FGSC 8958) (Rice blast fungus).